We begin with the raw amino-acid sequence, 60 residues long: Metallothionein (60 aa).

The beta stretch occupies residues 1 to 28 (MDPCECSKTGKCSCGGSCTCTNCSCTSC). Residues cysteine 4, cysteine 6, cysteine 12, cysteine 14, cysteine 18, cysteine 20, cysteine 23, cysteine 25, cysteine 28, cysteine 32, cysteine 33, cysteine 35, cysteine 36, cysteine 40, cysteine 43, cysteine 47, cysteine 49, cysteine 54, cysteine 58, and cysteine 59 each coordinate a divalent metal cation. The interval 29-60 (KKSCCPCCPSGCSKCASGCVCKGKTCDTSCCQ) is alpha.

Belongs to the metallothionein superfamily. Type 1 family.

Functionally, metallothioneins have a high content of cysteine residues that bind various heavy metals. This is Metallothionein (mt) from Chelon auratus (Golden grey mullet).